A 997-amino-acid chain; its full sequence is Bifunctional purine synthesis protein purC/E (997 aa).

The interval 1–305 (MTTAINNNIV…NNNNNNNNNS (305 aa)) is SAICAR synthetase. Composition is skewed to low complexity over residues 294–323 (LNNNNNNNNNNSNNNNNNTSSTSRSNSLPN), 342–355 (QQQSGVGNNNNVNS), and 524–536 (TSTSTTTTTTTTS). Disordered regions lie at residues 294-355 (LNNN…NVNS), 518-538 (IPVDNPTSTSTTTTTTTTSNA), 550-569 (INSNTSSHNNNQQQQQQQQT), and 575-604 (PTIINTPTPVRSSVSRSQSPLPSGNGSSII). Residues 305–997 (SNNNNNNTSS…GRKMGHVTQQ (693 aa)) form an AIR carboxylase region. A compositionally biased stretch (low complexity) spans 575 to 597 (PTIINTPTPVRSSVSRSQSPLPS). ATP contacts are provided by residues Arg-728, Lys-768, Gln-779, 807–810 (EQYI), and Glu-815. An ATP-grasp domain is found at 732 to 927 (KTFIQSLDIP…QFEQLIRCVC (196 aa)). Glu-880 and Glu-898 together coordinate Mg(2+). 897–898 (NE) is a binding site for ATP.

The protein in the N-terminal section; belongs to the SAICAR synthetase family. This sequence in the C-terminal section; belongs to the AIR carboxylase family. Class I subfamily. The cofactor is Mg(2+). Mn(2+) serves as cofactor.

It catalyses the reaction 5-amino-1-(5-phospho-D-ribosyl)imidazole-4-carboxylate + L-aspartate + ATP = (2S)-2-[5-amino-1-(5-phospho-beta-D-ribosyl)imidazole-4-carboxamido]succinate + ADP + phosphate + 2 H(+). The enzyme catalyses 5-amino-1-(5-phospho-D-ribosyl)imidazole-4-carboxylate + H(+) = 5-amino-1-(5-phospho-beta-D-ribosyl)imidazole + CO2. It participates in purine metabolism; IMP biosynthesis via de novo pathway; 5-amino-1-(5-phospho-D-ribosyl)imidazole-4-carboxylate from 5-amino-1-(5-phospho-D-ribosyl)imidazole (carboxylase route): step 1/1. It functions in the pathway purine metabolism; IMP biosynthesis via de novo pathway; 5-amino-1-(5-phospho-D-ribosyl)imidazole-4-carboxamide from 5-amino-1-(5-phospho-D-ribosyl)imidazole-4-carboxylate: step 1/2. Bifunctional enzyme involved in de novo IMP synthesis, an essential step for de nove purine synthesis. This chain is Bifunctional purine synthesis protein purC/E (purC/E), found in Dictyostelium discoideum (Social amoeba).